A 121-amino-acid polypeptide reads, in one-letter code: Basic phospholipase A2 caudoxin (121 aa).

7 cysteine pairs are disulfide-bonded: Cys25/Cys114, Cys27/Cys43, Cys42/Cys94, Cys48/Cys121, Cys49/Cys87, Cys56/Cys80, and Cys74/Cys85. Residues Tyr26, Gly28, and Gly30 each contribute to the Ca(2+) site. His46 is an active-site residue. Asp47 contacts Ca(2+). The active site involves Asp88.

The protein belongs to the phospholipase A2 family. Group II subfamily. D49 sub-subfamily. As to quaternary structure, monomer. Requires Ca(2+) as cofactor. Expressed by the venom gland.

The protein resides in the secreted. The enzyme catalyses a 1,2-diacyl-sn-glycero-3-phosphocholine + H2O = a 1-acyl-sn-glycero-3-phosphocholine + a fatty acid + H(+). Its function is as follows. Snake venom phospholipase A2 (PLA2) that shows anticoagulant activity and presynaptic neurotoxicity. Acts as an anticoagulant toxin by inhibiting prothrombinase complex formation. Shows about 50% of the prothrombinase complex inhibition compared to CM-IV of N.nigricollis venom. Acts as a neurotoxin by inhibiting neuromuscular transmission by blocking acetylcholine release from the nerve termini. PLA2 catalyzes the calcium-dependent hydrolysis of the 2-acyl groups in 3-sn-phosphoglycerides. This Bitis caudalis (Horned adder) protein is Basic phospholipase A2 caudoxin.